Here is a 156-residue protein sequence, read N- to C-terminus: Arginine repressor (156 aa).

This sequence belongs to the ArgR family.

The protein resides in the cytoplasm. Its pathway is amino-acid biosynthesis; L-arginine biosynthesis [regulation]. Regulates arginine biosynthesis genes. This Shewanella loihica (strain ATCC BAA-1088 / PV-4) protein is Arginine repressor.